Consider the following 52-residue polypeptide: Conotoxin-like peptide 2 (52 aa).

Residues 1-18 (MKFSTILLLVCPTVALSA) form the signal peptide. Disulfide bonds link Cys-24/Cys-38, Cys-31/Cys-42, and Cys-37/Cys-49.

It is found in the secreted. The polypeptide is Conotoxin-like peptide 2 (CTL-2) (Orgyia pseudotsugata (Douglas-fir tussock moth)).